Here is a 55-residue protein sequence, read N- to C-terminus: Small integral membrane protein 11 (55 aa).

Residues 9–29 (VPLLLYILAAKTLILCLAFAG) form a helical membrane-spanning segment. Residues 34–54 (QRRSLEGKLQAEKRKQSEKKA) adopt a coiled-coil conformation.

As to expression, expressed in brain, heart, kidney, thymus, liver, stomach, muscle, lung, testis, ovary, skin and eye.

It localises to the membrane. The sequence is that of Small integral membrane protein 11 from Mus musculus (Mouse).